Consider the following 119-residue polypeptide: MICOS complex subunit MIC13 (119 aa).

At 1–7 (MVARVWS) the chain is on the mitochondrial matrix side. Residues 8–26 (LMRFLIKGSVAGGAVYLVY) traverse the membrane as a helical segment. Over 27–119 (DQELLGPSDK…GWEYLKEHSK (93 aa)) the chain is Mitochondrial intermembrane.

Belongs to the MICOS complex subunit Mic13 family. Component of the mitochondrial contact site and cristae organizing system (MICOS) complex, composed of at least MICOS10/MIC10, CHCHD3/MIC19, CHCHD6/MIC25, APOO/MIC26, MICOS13/MIC13, APOOL/MIC27 and IMMT/MIC60. The MICOS complex associates with mitochondrial outer membrane proteins SAMM50, MTX1 and MTX2 (together described as components of the mitochondrial outer membrane sorting assembly machinery (SAM) complex) and DNAJC11, mitochondrial inner membrane protein TMEM11 and with HSPA9. The MICOS and SAM complexes together with DNAJC11 are part of a large protein complex spanning both membranes termed the mitochondrial intermembrane space bridging (MIB) complex.

The protein localises to the mitochondrion inner membrane. Component of the MICOS complex, a large protein complex of the mitochondrial inner membrane that plays crucial roles in the maintenance of crista junctions, inner membrane architecture, and formation of contact sites to the outer membrane. Constituent of mature MICOS complex, it is required for the formation of cristae junction (CJ) and maintenance of cristae morphology. Required for the incorporation of MICOS10/MIC10 into the MICOS complex. The polypeptide is MICOS complex subunit MIC13 (Micos13) (Mus musculus (Mouse)).